A 176-amino-acid polypeptide reads, in one-letter code: MAAPVLLRVSVPRWERVARYAVCAAGILLSIYAYHVEREKERDPEHRALCDLGPWVKCSAALASRWGRGFGLLGSIFGKDGVLNQPNSVFGLIFYILQLLLGMTASAVAALILMTSSIMSVVGSLYLAYILYFVLKEFCIICIVTYVLNFLLLIINYKRLVYLNEAWKRQLQPKQD.

Topologically, residues 1–13 (MAAPVLLRVSVPR) are cytoplasmic. Residues 14 to 36 (WERVARYAVCAAGILLSIYAYHV) traverse the membrane as a helical segment. The Lumenal portion of the chain corresponds to 37–87 (EREKERDPEHRALCDLGPWVKCSAALASRWGRGFGLLGSIFGKDGVLNQPN). Cys-50 and Cys-58 are disulfide-bonded. Residue Asn-87 participates in (S)-warfarin binding. The helical transmembrane segment at 88 to 102 (SVFGLIFYILQLLLG) threads the bilayer. The Cytoplasmic segment spans residues 103–107 (MTASA). A helical transmembrane segment spans residues 108 to 135 (VAALILMTSSIMSVVGSLYLAYILYFVL). At 136 to 138 (KEF) the chain is on the lumenal side. Residues Cys-139 and Cys-142 are joined by a disulfide bond. The chain crosses the membrane as a helical span at residues 139–160 (CIICIVTYVLNFLLLIINYKRL). Phylloquinone-binding residues include Cys-142 and Tyr-146. Tyr-146 is a binding site for (S)-warfarin. The Cytoplasmic segment spans residues 161 to 176 (VYLNEAWKRQLQPKQD).

The protein belongs to the VKOR family.

It localises to the endoplasmic reticulum membrane. It carries out the reaction phylloquinone + [protein]-disulfide + H2O = 2,3-epoxyphylloquinone + [protein]-dithiol. It catalyses the reaction phylloquinol + [protein]-disulfide = phylloquinone + [protein]-dithiol. Inhibited by warfarin (coumadin). Warfarin locks VKORC1 in both redox states into the closed conformation. Involved in vitamin K metabolism. Can reduce inactive vitamin K 2,3-epoxide to active vitamin K, and may contribute to vitamin K-mediated protection against oxidative stress. Plays a role in vitamin K-dependent gamma-carboxylation of Glu residues in target proteins. The chain is Vitamin K epoxide reductase complex subunit 1-like protein 1 (VKORC1L1) from Homo sapiens (Human).